Reading from the N-terminus, the 428-residue chain is UPF0761 membrane protein Ppha_1623 (428 aa).

Transmembrane regions (helical) follow at residues 52-72 (LLSI…FVVF), 108-128 (SVPI…ISTV), 148-168 (FTLY…SLAA), 189-209 (LLSF…YMLV), 216-233 (FVHA…FELS), and 252-272 (GALS…IVVL).

It belongs to the UPF0761 family.

Its subcellular location is the cell inner membrane. This Pelodictyon phaeoclathratiforme (strain DSM 5477 / BU-1) protein is UPF0761 membrane protein Ppha_1623.